The following is a 184-amino-acid chain: Elongation factor P (184 aa).

This sequence belongs to the elongation factor P family.

It localises to the cytoplasm. Its pathway is protein biosynthesis; polypeptide chain elongation. Functionally, involved in peptide bond synthesis. Stimulates efficient translation and peptide-bond synthesis on native or reconstituted 70S ribosomes in vitro. Probably functions indirectly by altering the affinity of the ribosome for aminoacyl-tRNA, thus increasing their reactivity as acceptors for peptidyl transferase. The polypeptide is Elongation factor P (Verminephrobacter eiseniae (strain EF01-2)).